The sequence spans 124 residues: Small ribosomal subunit protein uS12 (124 aa).

The residue at position 89 (aspartate 89) is a 3-methylthioaspartic acid.

It belongs to the universal ribosomal protein uS12 family. As to quaternary structure, part of the 30S ribosomal subunit. Contacts proteins S8 and S17. May interact with IF1 in the 30S initiation complex.

Its function is as follows. With S4 and S5 plays an important role in translational accuracy. In terms of biological role, interacts with and stabilizes bases of the 16S rRNA that are involved in tRNA selection in the A site and with the mRNA backbone. Located at the interface of the 30S and 50S subunits, it traverses the body of the 30S subunit contacting proteins on the other side and probably holding the rRNA structure together. The combined cluster of proteins S8, S12 and S17 appears to hold together the shoulder and platform of the 30S subunit. The chain is Small ribosomal subunit protein uS12 from Koribacter versatilis (strain Ellin345).